The chain runs to 350 residues: Protein pelota homolog (350 aa).

The protein belongs to the eukaryotic release factor 1 family. Pelota subfamily. As to quaternary structure, monomer. It depends on a divalent metal cation as a cofactor.

The protein localises to the cytoplasm. Functionally, may function in recognizing stalled ribosomes, interact with stem-loop structures in stalled mRNA molecules, and effect endonucleolytic cleavage of the mRNA. May play a role in the release non-functional ribosomes and degradation of damaged mRNAs. Has endoribonuclease activity. This is Protein pelota homolog from Methanosarcina barkeri (strain Fusaro / DSM 804).